We begin with the raw amino-acid sequence, 412 residues long: Alanyl-tRNA editing protein Aarsd1 (412 aa).

Zn(2+) is bound by residues His109 and His113. Ser174 carries the phosphoserine modification. Positions 209 and 213 each coordinate Zn(2+).

Belongs to the class-II aminoacyl-tRNA synthetase family. Alax-L subfamily. Zn(2+) serves as cofactor.

It is found in the cytoplasm. Functions in trans to edit the amino acid moiety from incorrectly charged tRNA(Ala). In Rattus norvegicus (Rat), this protein is Alanyl-tRNA editing protein Aarsd1 (Aarsd1).